The sequence spans 207 residues: dTTP/UTP pyrophosphatase (207 aa).

The Proton acceptor role is filled by D87.

It belongs to the Maf family. YhdE subfamily. The cofactor is a divalent metal cation.

The protein resides in the cytoplasm. It catalyses the reaction dTTP + H2O = dTMP + diphosphate + H(+). The enzyme catalyses UTP + H2O = UMP + diphosphate + H(+). Nucleoside triphosphate pyrophosphatase that hydrolyzes dTTP and UTP. May have a dual role in cell division arrest and in preventing the incorporation of modified nucleotides into cellular nucleic acids. The polypeptide is dTTP/UTP pyrophosphatase (Bordetella pertussis (strain Tohama I / ATCC BAA-589 / NCTC 13251)).